The sequence spans 106 residues: UPF0060 membrane protein RL1530 (106 aa).

4 consecutive transmembrane segments (helical) span residues 4–24 (IIFA…WAWL), 30–50 (VWWL…LTLV), 58–78 (TFAA…WLVE), and 86–106 (DIGG…APRG).

This sequence belongs to the UPF0060 family.

The protein resides in the cell inner membrane. This chain is UPF0060 membrane protein RL1530, found in Rhizobium johnstonii (strain DSM 114642 / LMG 32736 / 3841) (Rhizobium leguminosarum bv. viciae).